Reading from the N-terminus, the 464-residue chain is Soluble pyridine nucleotide transhydrogenase (464 aa).

An FAD-binding site is contributed by 35 to 44; sequence DSRRQVGGNC.

Belongs to the class-I pyridine nucleotide-disulfide oxidoreductase family. FAD is required as a cofactor.

Its subcellular location is the cytoplasm. It catalyses the reaction NAD(+) + NADPH = NADH + NADP(+). In terms of biological role, conversion of NADPH, generated by peripheral catabolic pathways, to NADH, which can enter the respiratory chain for energy generation. In Pseudomonas syringae pv. syringae (strain B728a), this protein is Soluble pyridine nucleotide transhydrogenase.